The primary structure comprises 345 residues: Phosphate acyltransferase (345 aa).

The protein belongs to the PlsX family. In terms of assembly, homodimer. Probably interacts with PlsY.

The protein resides in the cytoplasm. It catalyses the reaction a fatty acyl-[ACP] + phosphate = an acyl phosphate + holo-[ACP]. It participates in lipid metabolism; phospholipid metabolism. Catalyzes the reversible formation of acyl-phosphate (acyl-PO(4)) from acyl-[acyl-carrier-protein] (acyl-ACP). This enzyme utilizes acyl-ACP as fatty acyl donor, but not acyl-CoA. This Proteus mirabilis (strain HI4320) protein is Phosphate acyltransferase.